A 304-amino-acid chain; its full sequence is MSLFDWFANRRKSHPVTKAQPEREISDGLWSKCESCGALTYTKDLRANQMVCLECGHHLRVTSDERIAQLIDAETWVAMDNNLVACDPLQFRDRKAYCDRIQEYQSKTGLQDAVQTGVGELDGLPLALGVMDFRFMGGSMGSVVGEKLTRLIEHATQNRLPLVIVCASGGARMQEGMLSLMQMAKTSAALDQHRTNRLLYIPVLTHPTTGGVTASFAMLGDMILAEPKATIGFAGRRVVEQTLREKLPDDFQTAEYLLSHGFVDAIVPRPELKRTLAQLIRIHAQMPMASDVSPAAVPVAAAVE.

The region spanning L29–P298 is the CoA carboxyltransferase N-terminal domain. Residues C33, C36, C52, and C55 each contribute to the Zn(2+) site. The C4-type zinc finger occupies C33–C55.

This sequence belongs to the AccD/PCCB family. Acetyl-CoA carboxylase is a heterohexamer composed of biotin carboxyl carrier protein (AccB), biotin carboxylase (AccC) and two subunits each of ACCase subunit alpha (AccA) and ACCase subunit beta (AccD). Requires Zn(2+) as cofactor.

Its subcellular location is the cytoplasm. It carries out the reaction N(6)-carboxybiotinyl-L-lysyl-[protein] + acetyl-CoA = N(6)-biotinyl-L-lysyl-[protein] + malonyl-CoA. It functions in the pathway lipid metabolism; malonyl-CoA biosynthesis; malonyl-CoA from acetyl-CoA: step 1/1. Functionally, component of the acetyl coenzyme A carboxylase (ACC) complex. Biotin carboxylase (BC) catalyzes the carboxylation of biotin on its carrier protein (BCCP) and then the CO(2) group is transferred by the transcarboxylase to acetyl-CoA to form malonyl-CoA. This chain is Acetyl-coenzyme A carboxylase carboxyl transferase subunit beta, found in Acaryochloris marina (strain MBIC 11017).